The following is a 169-amino-acid chain: MVDAATKKTLSNIPLLKTKAGPRDRDLWVQRLKEEYQALIQYVENNKKEDNDWFRLESNKEGTRWFGKCWHYQDLMKYEFEIEFDIPITFPTTAPEIAIPELEGKTAKMYRGGKICLTDHFKPLWGRNVPKFGIAHAMALGLGPWLAVEIPDLISKGLVQHKDDQQQQK.

The Glycyl thioester intermediate role is filled by Cys116.

This sequence belongs to the ubiquitin-conjugating enzyme family. UFC1 subfamily.

In terms of biological role, E2-like enzyme which forms an intermediate with UFM1 via a thioester linkage. The polypeptide is Ubiquitin-fold modifier-conjugating enzyme 1 (Branchiostoma floridae (Florida lancelet)).